The following is a 507-amino-acid chain: Trigger factor (507 aa).

One can recognise a PPIase FKBP-type domain in the interval 162 to 243; the sequence is GDFVSLDLSA…VRGVKEKELP (82 aa). Positions 434–507 are disordered; sequence NLPRRPSGEA…DSELPASETK (74 aa). Over residues 442 to 460 the composition is skewed to acidic residues; the sequence is EAEDDVRDISDELDAEELE. Residues 461–488 are compositionally biased toward low complexity; that stretch reads VPAAAPSAEVTAAAGDEATATATATDAD.

Belongs to the FKBP-type PPIase family. Tig subfamily.

The protein resides in the cytoplasm. The enzyme catalyses [protein]-peptidylproline (omega=180) = [protein]-peptidylproline (omega=0). Functionally, involved in protein export. Acts as a chaperone by maintaining the newly synthesized protein in an open conformation. Functions as a peptidyl-prolyl cis-trans isomerase. This Parafrankia sp. (strain EAN1pec) protein is Trigger factor.